A 754-amino-acid chain; its full sequence is Elongation factor G-2, mitochondrial (754 aa).

Positions 63–340 (DKLRNIGISA…GVVSFLPSPN (278 aa)) constitute a tr-type G domain. Residues 72 to 79 (AHIDSGKT), 139 to 143 (DTPGH), and 193 to 196 (NKLD) contribute to the GTP site.

This sequence belongs to the TRAFAC class translation factor GTPase superfamily. Classic translation factor GTPase family. EF-G/EF-2 subfamily. Expressed in cotyledons and adult leaves at the same levels.

The protein localises to the mitochondrion. It functions in the pathway protein biosynthesis; polypeptide chain elongation. Its function is as follows. Mitochondrial GTPase that catalyzes the GTP-dependent ribosomal translocation step during translation elongation. During this step, the ribosome changes from the pre-translocational (PRE) to the post-translocational (POST) state as the newly formed A-site-bound peptidyl-tRNA and P-site-bound deacylated tRNA move to the P and E sites, respectively. Catalyzes the coordinated movement of the two tRNA molecules, the mRNA and conformational changes in the ribosome. The polypeptide is Elongation factor G-2, mitochondrial (MEFG2) (Arabidopsis thaliana (Mouse-ear cress)).